Here is a 585-residue protein sequence, read N- to C-terminus: MDRNSVTGLALIALIMIVWLQFMSPEKKPLQQVTDAGKARTEQVAAEINSDMQPAAVPATEDSFGMFAPAASGTERLTVIDNDLFHAVVSSKGATLKSLVLKKHLDGNLKPFDLVSDAKNGALSMLFLTREGRRIDTRDLYFAGSSLDTLHTIKGKETYALSYRLALSPRQSIEVSYTFTGDSYRIGYDVKLTGLSGSLAGNEYQVQWDGGLPYTEKNRDDEARSAQASAYLGGSLVKLDAEKDGRSYREEQSGDARWVAVRNKYFIAALIPEDRTAGFYLDGQKERGNAYENYLASLKMEVPASEEVVDSRFSLYLGPLDYNTVKAQHADIEKIMDFGWDWLTRPFAEFVILPAFTWMNRFVSNYGLIIIIFAFLIKLVTYPLSTASTKSMKKMAALQPMLKELQDKYKDNPAKLQSELGRIYKEAGVNPLGGCLPVVLQMPLLFAMFYVFRSSIQLRQHGFLWVKDLSVPDSILDFGFTIPMYGSHIALLPILMAVTVFLQQKITPTAQSNDQMKIMLYMFPAMMLLFFNNMPSGLALYYLMFNVFSVAQQFYINSTSSAADLPQVSISAPSRPKKKKSGSGK.

6 helical membrane-spanning segments follow: residues 5–25 (SVTG…FMSP), 338–358 (FGWD…AFTW), 362–382 (FVSN…LVTY), 432–452 (LGGC…FYVF), 482–502 (IPMY…TVFL), and 518–538 (IMLY…PSGL).

This sequence belongs to the OXA1/ALB3/YidC family. Type 1 subfamily. In terms of assembly, interacts with the Sec translocase complex via SecD. Specifically interacts with transmembrane segments of nascent integral membrane proteins during membrane integration.

The protein localises to the cell inner membrane. Its function is as follows. Required for the insertion and/or proper folding and/or complex formation of integral membrane proteins into the membrane. Involved in integration of membrane proteins that insert both dependently and independently of the Sec translocase complex, as well as at least some lipoproteins. Aids folding of multispanning membrane proteins. The protein is Membrane protein insertase YidC of Chlorobium luteolum (strain DSM 273 / BCRC 81028 / 2530) (Pelodictyon luteolum).